The sequence spans 1685 residues: Phosphatidylinositol 4-phosphate 3-kinase C2 domain-containing subunit alpha (1685 aa).

Disordered stretches follow at residues 1 to 33 and 41 to 60; these read MAQI…EALQ and KLQK…LSSS. At Ala2 the chain carries N-acetylalanine. The interaction with clathrin; sufficient to induce clathrin assembly stretch occupies residues 2–142; that stretch reads AQISSNSGFK…FRPTIQRGQW (141 aa). The span at 19 to 31 shows a compositional bias: basic and acidic residues; it reads EPTRAKDVDKEEA. The span at 49 to 60 shows a compositional bias: polar residues; it reads TDNQRGFELSSS. A phosphoserine mark is found at Ser60, Ser108, Ser259, Ser327, and Ser338. Residues 419-507 form the PI3K-RBD domain; that stretch reads NASVKVSIDI…DTEIRLQLLT (89 aa). Ser628 bears the Phosphoserine mark. Residues 680–839 form the C2 PI3K-type domain; it reads TTEQLQFTIF…ERIVLQVDFP (160 aa). The region spanning 859-1035 is the PIK helical domain; it reads QHNLETLEND…EHVLGALLSV (177 aa). Positions 1103–1381 constitute a PI3K/PI4K catalytic domain; it reads SIKSCSFFSS…LIESSLGSIA (279 aa). A G-loop region spans residues 1109–1115; sequence FFSSNAV. The interval 1245–1253 is catalytic loop; sequence GICDRHNDN. Residues 1264 to 1290 are activation loop; it reads HIDFGKFLGHAQMFGTFKRDRAPFVLT. Residues 1420 to 1536 form the PX domain; the sequence is GRIKEVSVFT…TFFHPLLRDE (117 aa). Residues 1486-1491 are interaction with PtdIns(4,5)P2-containing membranes; sequence RMVLGR. Ser1551 bears the Phosphoserine mark. A C2 domain is found at 1554–1677; sequence TPGQIGGAVK…NLSKETVKWY (124 aa). The Nuclear localization signal motif lies at 1607 to 1618; it reads SKRKTKISRKTR.

This sequence belongs to the PI3/PI4-kinase family. In terms of assembly, part of a complex with ERBB2 and EGFR. Interacts with clathrin trimers. Interacts with SBF2/MTMR13. Ca(2+) is required as a cofactor. The cofactor is Mg(2+). Phosphorylated on Ser-259 during mitosis and upon UV irradiation; which does not change enzymatic activity but leads to proteasomal degradation. Phosphorylated upon insulin stimulation; which may lead to enzyme activation.

The protein localises to the cell membrane. It localises to the cytoplasmic vesicle. The protein resides in the clathrin-coated vesicle. It is found in the nucleus. Its subcellular location is the cytoplasm. The protein localises to the golgi apparatus. It localises to the trans-Golgi network. The enzyme catalyses a 1,2-diacyl-sn-glycero-3-phospho-(1D-myo-inositol 4-phosphate) + ATP = a 1,2-diacyl-sn-glycero-3-phospho-(1D-myo-inositol-3,4-bisphosphate) + ADP + H(+). It catalyses the reaction a 1,2-diacyl-sn-glycero-3-phospho-(1D-myo-inositol) + ATP = a 1,2-diacyl-sn-glycero-3-phospho-(1D-myo-inositol-3-phosphate) + ADP + H(+). It carries out the reaction a 1,2-diacyl-sn-glycero-3-phospho-(1D-myo-inositol-4,5-bisphosphate) + ATP = a 1,2-diacyl-sn-glycero-3-phospho-(1D-myo-inositol-3,4,5-trisphosphate) + ADP + H(+). Only slightly inhibited by wortmannin and LY294002. Activated by clathrin and insulin. Functionally, generates phosphatidylinositol 3-phosphate (PtdIns3P) and phosphatidylinositol 3,4-bisphosphate (PtdIns(3,4)P2) that act as second messengers. Has a role in several intracellular trafficking events. Functions in insulin signaling and secretion. Required for translocation of the glucose transporter SLC2A4/GLUT4 to the plasma membrane and glucose uptake in response to insulin-mediated RHOQ activation. Regulates insulin secretion through two different mechanisms: involved in glucose-induced insulin secretion downstream of insulin receptor in a pathway that involves AKT1 activation and TBC1D4/AS160 phosphorylation, and participates in the late step of insulin granule exocytosis probably in insulin granule fusion. Synthesizes PtdIns3P in response to insulin signaling. Functions in clathrin-coated endocytic vesicle formation and distribution. Regulates dynamin-independent endocytosis, probably by recruiting EEA1 to internalizing vesicles. In neurosecretory cells synthesizes PtdIns3P on large dense core vesicles. Participates in calcium induced contraction of vascular smooth muscle by regulating myosin light chain (MLC) phosphorylation through a mechanism involving Rho kinase-dependent phosphorylation of the MLCP-regulatory subunit MYPT1. May play a role in the EGF signaling cascade. May be involved in mitosis and UV-induced damage response. Required for maintenance of normal renal structure and function by supporting normal podocyte function. Involved in the regulation of ciliogenesis and trafficking of ciliary components. The sequence is that of Phosphatidylinositol 4-phosphate 3-kinase C2 domain-containing subunit alpha (PIK3C2A) from Pongo abelii (Sumatran orangutan).